The sequence spans 500 residues: MTCGSGFRGRAFSCVSACGPRPGRCCITAAPYRGISCYRGLTGGFGSRSICGGFRAGSFGRSFGYRSGGVGGLNPPCITTVSVNESLLTPLNLEIDPNAQCVKQEEKEQIKCLNNRFAAFIDKVRFLEQQNKLLETKLQFYQNRQCCESNLEPLFNGYIETLRREAECVEADSGRLSSELNSLQEVLEGYKKKYEEEVALRATAENEFVALKKDVDCAYLRKSDLEANVEALIQEIDFLRRLYEEEIRVLQAHISDTSVIVKMDNSRDLNMDNIVAEIKAQYDDIASRSRAEAESWYRSKCEEIKATVIRHGETLRRTKEEINELNRVIQRLTAEVENAKCQNSKLEAAVTQAEQQGEAALNDAKCKLAGLEEALQKAKQDMACLLKEYQEVMNSKLGLDIEIATYRRLLEGEEQRLCEGVGSVNVCVSSSRGGVVCGDLCVSGSRPVTGSVCSAPCSGNLAVSTGLCAPCGPCNSVTSCGLGGISSCGVGSCASVCRKC.

A head region spans residues 1-106 (MTCGSGFRGR…PNAQCVKQEE (106 aa)). The region spanning 106 to 417 (EKEQIKCLNN…RLLEGEEQRL (312 aa)) is the IF rod domain. A coil 1A region spans residues 107 to 141 (KEQIKCLNNRFAAFIDKVRFLEQQNKLLETKLQFY). The tract at residues 142 to 151 (QNRQCCESNL) is linker 1. A coil 1B region spans residues 152 to 252 (EPLFNGYIET…YEEEIRVLQA (101 aa)). A Glycyl lysine isopeptide (Lys-Gly) (interchain with G-Cter in SUMO1) cross-link involves residue Lys-212. The interval 253–269 (HISDTSVIVKMDNSRDL) is linker 12. The segment at 270 to 413 (NMDNIVAEIK…ATYRRLLEGE (144 aa)) is coil 2. The tract at residues 414–500 (EQRLCEGVGS…GSCASVCRKC (87 aa)) is tail.

This sequence belongs to the intermediate filament family. Heterotetramer of two type I and two type II keratins.

The chain is Keratin, type II cuticular Hb1 from Bos taurus (Bovine).